The sequence spans 238 residues: Metal-independent phosphoserine phosphatase (238 aa).

Catalysis depends on His-32, which acts as the Tele-phosphohistidine intermediate. The active-site Proton donor/acceptor is Glu-107.

The protein belongs to the phosphoglycerate mutase family.

The catalysed reaction is O-phospho-L-serine + H2O = L-serine + phosphate. It carries out the reaction O-phospho-D-serine + H2O = D-serine + phosphate. Its function is as follows. Phosphoglycerate mutase-like protein lacking PGM activity, but having a low metal-independent phosphoserine phosphatase activity in vitro. May be involved in serine biosynthesis. This is Metal-independent phosphoserine phosphatase (IPSP) from Arabidopsis thaliana (Mouse-ear cress).